We begin with the raw amino-acid sequence, 1404 residues long: MNQELTNNPFNPLTPPKAFDEIKVSLASPERILSWSYGEIKKPETINYRTFKPERDGLFCARIFGPIKDYECLCGKYKRMKYRGVVCEKCGVEVTLQKVRRERMGHIELAAPVAHIWFLKSLPSRIGLMLDMTLRDLERILYFENYVVIEPGLTDLTYGQLMGEEEFMDAQDAYGADAFQANIGAEAIREMLSQIDLESEANQLREDLKEATGELKPKKIIKRLKIVESFLESGNRPEWMVMTVVPVIPPELRPLVPLDGGRFATSDLNDLYRRVINRNNRLKRLIELRAPDIIIRNEKRMLQESVDALFDNGRRGRVITGANKRPLKSLSDMLKGKQGRFRQNLLGKRVDFSGRSVIVTGPELKLHQCGLPKKMALELFKPFIYSRLEAKGLSSTVKQAKKLVEKERPEVWDILDEVIREHPVLLNRAPTLHRLGIQAFEPVLIEGKAIQLHPLVCSAFNADFDGDQMAVHVPLSLEAQLEARVLMMSTNNVLSPANGAPIIVPSQDMILGLYYVTLAREGMKGEGMIFADVDEVRHALDAGEIHLHSKITARLPQIDEEGNEIMVRFDTTPGRVMLGALLPLNAKAPFDLVNRLLRKKEVQQVIDTVYRYCGQKESVIFCDQIMSMGFKEAFKAGISFGKDDMVIPDTKWTLVEDARDQVEEFEQQYMDGLITQGEKYNKVIDAWSKVNDKVTDAMMGTISASKRDENDAEMEPNSVYMMAHSGARGSVTQMKQLGGMRGLMAKPNGEIIETPIISNFKEGLTVLEYFNSTHGARKGLSDTALKTANSGYLTRRLVDVAQDCIVRMDDCGTENTIKAEAAVNDGEVVASLAERILGRTAGEDVFIPGTDEIIVAKGELIDERKADAVEAAGVTTMQMRSPLTCEAEEGVCATCYGRDLARGTKVNTGEAVGIIAAQSIGEPGTQLTMRTFHIGGVAQGGQQSFQEVNVDGKVEFRNANLLKNANGESVVMGRNMVLAIMDDQGSERASFKLGYGTNVLVEDGKKVVRGDRLFEWDPYTLPIIAEAAGTAKFVDLVSGISIRDETDDATGMTQKIVSDWRTAPKGNELKPEIIIAGEDGEPMRNDQGNPVTYTMSVDAILSIEEGQTVKAGDVIARIPREGAKTKDITGGLPRVAELFEARRPKDHAIIAEIDGYVKFGRDFKNKRRIGIVPADESLEPVEYMVPKGKHIPVAEGDFVQVGDYIMDGNPAPHDILAVLGVEALADYMIDEVQDVYRLQGVKINDKHIEVIVRQMLQKWEIQDSGETTLLKGEHVDKAEFDSANAKAVRDGRRPAQGEPILLGITKASLQTRSFISAASFQETTRVLTEASVQGKKDRLVGLKENVIVGRLIPAGTGGATQDVERIAKGRDQVVIDAAQAEAEAAAALAAPVMEDAAPDTDAAE.

Positions 72, 74, 87, and 90 each coordinate Zn(2+). Residues Asp-463, Asp-465, and Asp-467 each contribute to the Mg(2+) site. Zn(2+) contacts are provided by Cys-811, Cys-885, Cys-892, and Cys-895.

It belongs to the RNA polymerase beta' chain family. As to quaternary structure, the RNAP catalytic core consists of 2 alpha, 1 beta, 1 beta' and 1 omega subunit. When a sigma factor is associated with the core the holoenzyme is formed, which can initiate transcription. Mg(2+) is required as a cofactor. Zn(2+) serves as cofactor.

The catalysed reaction is RNA(n) + a ribonucleoside 5'-triphosphate = RNA(n+1) + diphosphate. In terms of biological role, DNA-dependent RNA polymerase catalyzes the transcription of DNA into RNA using the four ribonucleoside triphosphates as substrates. This Jannaschia sp. (strain CCS1) protein is DNA-directed RNA polymerase subunit beta'.